The following is a 373-amino-acid chain: Queuine tRNA-ribosyltransferase (373 aa).

Asp-93 acts as the Proton acceptor in catalysis. Residues 93–97 (DSGGF), Asp-147, Gln-190, and Gly-219 contribute to the substrate site. The RNA binding stretch occupies residues 250–256 (GVGEPVD). Residue Asp-269 is the Nucleophile of the active site. Residues 274–278 (TRLAR) are RNA binding; important for wobble base 34 recognition. Residues Cys-307, Cys-309, Cys-312, and His-338 each coordinate Zn(2+).

Belongs to the queuine tRNA-ribosyltransferase family. Homodimer. Within each dimer, one monomer is responsible for RNA recognition and catalysis, while the other monomer binds to the replacement base PreQ1. The cofactor is Zn(2+).

It catalyses the reaction 7-aminomethyl-7-carbaguanine + guanosine(34) in tRNA = 7-aminomethyl-7-carbaguanosine(34) in tRNA + guanine. It functions in the pathway tRNA modification; tRNA-queuosine biosynthesis. Functionally, catalyzes the base-exchange of a guanine (G) residue with the queuine precursor 7-aminomethyl-7-deazaguanine (PreQ1) at position 34 (anticodon wobble position) in tRNAs with GU(N) anticodons (tRNA-Asp, -Asn, -His and -Tyr). Catalysis occurs through a double-displacement mechanism. The nucleophile active site attacks the C1' of nucleotide 34 to detach the guanine base from the RNA, forming a covalent enzyme-RNA intermediate. The proton acceptor active site deprotonates the incoming PreQ1, allowing a nucleophilic attack on the C1' of the ribose to form the product. After dissociation, two additional enzymatic reactions on the tRNA convert PreQ1 to queuine (Q), resulting in the hypermodified nucleoside queuosine (7-(((4,5-cis-dihydroxy-2-cyclopenten-1-yl)amino)methyl)-7-deazaguanosine). The polypeptide is Queuine tRNA-ribosyltransferase (Fusobacterium nucleatum subsp. nucleatum (strain ATCC 25586 / DSM 15643 / BCRC 10681 / CIP 101130 / JCM 8532 / KCTC 2640 / LMG 13131 / VPI 4355)).